We begin with the raw amino-acid sequence, 460 residues long: Bifunctional protein GlmU (460 aa).

Positions 1 to 232 are pyrophosphorylase; it reads MALNVVILAA…AIEVEGANNR (232 aa). Residues 8 to 11, lysine 22, glutamine 73, 78 to 79, 100 to 102, glycine 137, glutamate 157, asparagine 172, and asparagine 230 each bind UDP-N-acetyl-alpha-D-glucosamine; these read LAAG, GT, and YGD. Aspartate 102 is a binding site for Mg(2+). Asparagine 230 serves as a coordination point for Mg(2+). The interval 233 to 253 is linker; it reads VQLAQLERAYQAREAEKLMLA. The N-acetyltransferase stretch occupies residues 254–460; that stretch reads GANLRDPSRI…GWQRPVKIKK (207 aa). 2 residues coordinate UDP-N-acetyl-alpha-D-glucosamine: arginine 336 and lysine 354. The Proton acceptor role is filled by histidine 366. Residues tyrosine 369 and asparagine 380 each coordinate UDP-N-acetyl-alpha-D-glucosamine. Acetyl-CoA-binding positions include alanine 383, 389–390, serine 408, alanine 426, and arginine 443; that span reads NY.

The protein in the N-terminal section; belongs to the N-acetylglucosamine-1-phosphate uridyltransferase family. It in the C-terminal section; belongs to the transferase hexapeptide repeat family. Homotrimer. Mg(2+) is required as a cofactor.

It is found in the cytoplasm. The enzyme catalyses alpha-D-glucosamine 1-phosphate + acetyl-CoA = N-acetyl-alpha-D-glucosamine 1-phosphate + CoA + H(+). The catalysed reaction is N-acetyl-alpha-D-glucosamine 1-phosphate + UTP + H(+) = UDP-N-acetyl-alpha-D-glucosamine + diphosphate. It functions in the pathway nucleotide-sugar biosynthesis; UDP-N-acetyl-alpha-D-glucosamine biosynthesis; N-acetyl-alpha-D-glucosamine 1-phosphate from alpha-D-glucosamine 6-phosphate (route II): step 2/2. The protein operates within nucleotide-sugar biosynthesis; UDP-N-acetyl-alpha-D-glucosamine biosynthesis; UDP-N-acetyl-alpha-D-glucosamine from N-acetyl-alpha-D-glucosamine 1-phosphate: step 1/1. It participates in bacterial outer membrane biogenesis; LPS lipid A biosynthesis. Functionally, catalyzes the last two sequential reactions in the de novo biosynthetic pathway for UDP-N-acetylglucosamine (UDP-GlcNAc). The C-terminal domain catalyzes the transfer of acetyl group from acetyl coenzyme A to glucosamine-1-phosphate (GlcN-1-P) to produce N-acetylglucosamine-1-phosphate (GlcNAc-1-P), which is converted into UDP-GlcNAc by the transfer of uridine 5-monophosphate (from uridine 5-triphosphate), a reaction catalyzed by the N-terminal domain. This chain is Bifunctional protein GlmU, found in Shewanella baltica (strain OS195).